We begin with the raw amino-acid sequence, 147 residues long: Large ribosomal subunit protein bL9 (147 aa).

Belongs to the bacterial ribosomal protein bL9 family.

Binds to the 23S rRNA. The sequence is that of Large ribosomal subunit protein bL9 from Mesoplasma florum (strain ATCC 33453 / NBRC 100688 / NCTC 11704 / L1) (Acholeplasma florum).